Reading from the N-terminus, the 763-residue chain is Protein translocase subunit SecA 2 (763 aa).

ATP-binding positions include Gln83, 101 to 105 (GEGKT), and Asp490.

It belongs to the SecA family. Monomer and homodimer. Part of the essential Sec protein translocation apparatus which comprises SecA, SecYEG and auxiliary proteins SecDF. Other proteins may also be involved.

It is found in the cell membrane. Its subcellular location is the cytoplasm. The catalysed reaction is ATP + H2O + cellular proteinSide 1 = ADP + phosphate + cellular proteinSide 2.. In terms of biological role, part of the Sec protein translocase complex. Interacts with the SecYEG preprotein conducting channel. Has a central role in coupling the hydrolysis of ATP to the transfer of proteins into and across the cell membrane, serving as an ATP-driven molecular motor driving the stepwise translocation of polypeptide chains across the membrane. The chain is Protein translocase subunit SecA 2 from Corynebacterium efficiens (strain DSM 44549 / YS-314 / AJ 12310 / JCM 11189 / NBRC 100395).